Here is a 473-residue protein sequence, read N- to C-terminus: 3-isopropylmalate dehydratase large subunit (473 aa).

The [4Fe-4S] cluster site is built by C354, C414, and C417.

Belongs to the aconitase/IPM isomerase family. LeuC type 1 subfamily. As to quaternary structure, heterodimer of LeuC and LeuD. It depends on [4Fe-4S] cluster as a cofactor.

The enzyme catalyses (2R,3S)-3-isopropylmalate = (2S)-2-isopropylmalate. It participates in amino-acid biosynthesis; L-leucine biosynthesis; L-leucine from 3-methyl-2-oxobutanoate: step 2/4. Functionally, catalyzes the isomerization between 2-isopropylmalate and 3-isopropylmalate, via the formation of 2-isopropylmaleate. This is 3-isopropylmalate dehydratase large subunit from Mycobacterium bovis (strain ATCC BAA-935 / AF2122/97).